The sequence spans 258 residues: UPF0246 protein Pnec_1068 (258 aa).

The protein belongs to the UPF0246 family.

The polypeptide is UPF0246 protein Pnec_1068 (Polynucleobacter necessarius subsp. necessarius (strain STIR1)).